Consider the following 100-residue polypeptide: Small ribosomal subunit protein uS14c (100 aa).

Belongs to the universal ribosomal protein uS14 family. In terms of assembly, part of the 30S ribosomal subunit.

It localises to the plastid. It is found in the chloroplast. Binds 16S rRNA, required for the assembly of 30S particles. The chain is Small ribosomal subunit protein uS14c from Coffea arabica (Arabian coffee).